The following is a 244-amino-acid chain: Capsid protein (244 aa).

The Bipartite nuclear localization signal signature appears at 1 to 24 (MSTSKRKRADEVQWNKRSTKKKAS). The disordered stretch occupies residues 1–38 (MSTSKRKRADEVQWNKRSTKKKASAPPVKKTGGKADRP).

Belongs to the geminiviridae capsid protein family. Homomultimer. Interacts with the movement protein. Binds to single-stranded and double-stranded viral DNA.

It is found in the virion. Its subcellular location is the host nucleus. In terms of biological role, encapsidates the viral genome into characteristic twinned ('geminate') particles. Binds the genomic viral ssDNA and shuttles it into and out of the cell nucleus. Plays a role in protection of the genome from degradation, virus acquisition and transmission by insect vectors, infectivity, and systemic movement. The CP of monopartite geminiviruses is absolutely essential for virus movement. The protein is Capsid protein of Maize streak virus genotype E (isolate Pat) (MSV).